A 256-amino-acid polypeptide reads, in one-letter code: Pimeloyl-[acyl-carrier protein] methyl ester esterase (256 aa).

Residues 15–242 form the AB hydrolase-1 domain; it reads HLVLLHGWGL…AAHAPFISHP (228 aa). Residues tryptophan 22, 82–83, and 143–147 each bind substrate; these read SL and FLALQ. Residue serine 82 is the Nucleophile of the active site. Active-site residues include aspartate 207 and histidine 235. Histidine 235 lines the substrate pocket.

This sequence belongs to the AB hydrolase superfamily. Carboxylesterase BioH family. In terms of assembly, monomer.

It is found in the cytoplasm. The enzyme catalyses 6-carboxyhexanoyl-[ACP] methyl ester + H2O = 6-carboxyhexanoyl-[ACP] + methanol + H(+). The protein operates within cofactor biosynthesis; biotin biosynthesis. In terms of biological role, the physiological role of BioH is to remove the methyl group introduced by BioC when the pimeloyl moiety is complete. It allows to synthesize pimeloyl-ACP via the fatty acid synthetic pathway through the hydrolysis of the ester bonds of pimeloyl-ACP esters. The protein is Pimeloyl-[acyl-carrier protein] methyl ester esterase of Salmonella newport (strain SL254).